The primary structure comprises 63 residues: UPF0337 protein PSPTO_1596 (63 aa).

Residues 20–63 are disordered; the sequence is KQAVGKATDNTKLQAEGKAQELKGEGQQAKGEVKDAVKKGVDKV. The span at 50–63 shows a compositional bias: basic and acidic residues; the sequence is GEVKDAVKKGVDKV.

Belongs to the UPF0337 (CsbD) family.

This Pseudomonas syringae pv. tomato (strain ATCC BAA-871 / DC3000) protein is UPF0337 protein PSPTO_1596.